A 248-amino-acid chain; its full sequence is Type III pantothenate kinase (248 aa).

Position 6–13 (6–13 (DCGNSLIK)) interacts with ATP. Residues Tyr-92 and 99 to 102 (GLDR) contribute to the substrate site. Asp-101 (proton acceptor) is an active-site residue. Residue Asp-121 coordinates K(+). ATP is bound at residue Thr-124. Thr-180 provides a ligand contact to substrate.

It belongs to the type III pantothenate kinase family. As to quaternary structure, homodimer. NH4(+) serves as cofactor. K(+) is required as a cofactor.

The protein localises to the cytoplasm. The enzyme catalyses (R)-pantothenate + ATP = (R)-4'-phosphopantothenate + ADP + H(+). Its pathway is cofactor biosynthesis; coenzyme A biosynthesis; CoA from (R)-pantothenate: step 1/5. Functionally, catalyzes the phosphorylation of pantothenate (Pan), the first step in CoA biosynthesis. The chain is Type III pantothenate kinase from Pseudomonas aeruginosa (strain LESB58).